A 199-amino-acid polypeptide reads, in one-letter code: Probable molybdenum cofactor guanylyltransferase (199 aa).

Residues 6 to 8, Lys18, Asp65, and Asp97 contribute to the GTP site; that span reads LAG. Residue Asp97 participates in Mg(2+) binding.

Belongs to the MobA family. Mg(2+) serves as cofactor.

Its subcellular location is the cytoplasm. It carries out the reaction Mo-molybdopterin + GTP + H(+) = Mo-molybdopterin guanine dinucleotide + diphosphate. Transfers a GMP moiety from GTP to Mo-molybdopterin (Mo-MPT) cofactor (Moco or molybdenum cofactor) to form Mo-molybdopterin guanine dinucleotide (Mo-MGD) cofactor. The chain is Probable molybdenum cofactor guanylyltransferase from Staphylococcus aureus (strain Mu50 / ATCC 700699).